The following is a 129-amino-acid chain: Small ribosomal subunit protein uS11c (129 aa).

This sequence belongs to the universal ribosomal protein uS11 family. As to quaternary structure, part of the 30S ribosomal subunit.

It localises to the plastid. It is found in the chloroplast. The polypeptide is Small ribosomal subunit protein uS11c (Cyanidium caldarium (Red alga)).